We begin with the raw amino-acid sequence, 240 residues long: Regulatory protein HlyX (240 aa).

Residues 15–28 form an essential for the oxygen-regulated activity region; that stretch reads CTIHCQNCSISQLC. Residues 163–236 enclose the HTH crp-type domain; that stretch reads MSAEEKLAAF…GKYITINRMD (74 aa). The H-T-H motif DNA-binding region spans 196–215; that stretch reads RGDIGNYLGLTIETISRLLG.

The protein localises to the cytoplasm. In terms of biological role, confers a hemolytic phenotype on E.coli. May regulate, rather than mediate, hemolytic activity. In Actinobacillus pleuropneumoniae (Haemophilus pleuropneumoniae), this protein is Regulatory protein HlyX (hlyX).